A 406-amino-acid polypeptide reads, in one-letter code: LIM/homeobox protein Lhx1 (406 aa).

2 consecutive LIM zinc-binding domains span residues 4–54 (CAGC…CKND) and 63–117 (CAGC…CKED). Disordered regions lie at residues 128 to 187 (NSLH…RTTI) and 293 to 374 (YDFF…EVFG). Positions 137 to 148 (SDPSLSPDSQDP) are enriched in low complexity. The segment covering 151–167 (DDAKDSESANVSDKEAG) has biased composition (basic and acidic residues). The residue at position 162 (S162) is a Phosphoserine. Positions 180–239 (RRGPRTTIKAKQLETLKAAFAATPKPTRHIREQLAQETGLNMRVIQVWFQNRRSKERRMK) form a DNA-binding region, homeobox. Positions 315–327 (PSSGPSGTPLGGL) are enriched in low complexity. Over residues 352 to 362 (GDSPSPEPSLP) the composition is skewed to pro residues.

As to quaternary structure, interacts with LDB1 via the tandem LIM domains. In terms of tissue distribution, expressed in the brain, thymus, and tonsils. Expressed in samples from patients with chronic myeloid leukemia (CML) and in 58% of acute myeloid leukemia (AML) cell lines.

The protein localises to the nucleus. In terms of biological role, potential transcription factor. May play a role in early mesoderm formation and later in lateral mesoderm differentiation and neurogenesis. The chain is LIM/homeobox protein Lhx1 (LHX1) from Homo sapiens (Human).